The chain runs to 445 residues: UPF0210 protein LACR_1020 (445 aa).

The protein belongs to the UPF0210 family. Homodimer.

The sequence is that of UPF0210 protein LACR_1020 from Lactococcus lactis subsp. cremoris (strain SK11).